The primary structure comprises 207 residues: Vexin (207 aa).

The tract at residues 65 to 104 is disordered; the sequence is RDTGDRRWLQTGRLQTARPPGAHPTKTPSRPVGISEPKTS.

It belongs to the vexin family.

The protein resides in the cell membrane. The protein localises to the nucleus. Its function is as follows. Required for neurogenesis in the neural plate and retina. Strongly cooperates with neural bHLH factors to promote neurogenesis. The sequence is that of Vexin from Mus musculus (Mouse).